The following is a 169-amino-acid chain: Macrocypin-1a (169 aa).

It belongs to the protease inhibitor I85 family.

Inhibits papain and cysteine cathepsin endopeptidases, and also inhibits cathepsins B and H, which exhibit both exopeptidase and endopeptidase activities. The sequence is that of Macrocypin-1a from Macrolepiota procera (Parasol mushroom).